Here is a 235-residue protein sequence, read N- to C-terminus: Peroxisomal membrane protein 11C (235 aa).

Residues 1–91 lie on the Cytoplasmic side of the membrane; it reads MSTLETTRAE…LPLVLLGKSK (91 aa). The helical transmembrane segment at 92–108 threads the bilayer; that stretch reads NALLSTFLFLDQIVWLG. The Lumenal segment spans residues 109-206; sequence RTGIYKDKER…LLQLAPKKVT (98 aa). A helical transmembrane segment spans residues 207 to 226; it reads PRVTGAFGFASSLISCYQLL. At 227-235 the chain is on the cytoplasmic side; it reads PSHPKSKMV.

Belongs to the peroxin-11 family. As to quaternary structure, homooligomer. Interacts with ARC5 and FIS1B on peroxisomes. Expressed in roots and developing siliques.

It is found in the peroxisome membrane. In terms of biological role, involved in peroxisomal proliferation. Promotes peroxisomal duplication, aggregation or elongation without fission. This Arabidopsis thaliana (Mouse-ear cress) protein is Peroxisomal membrane protein 11C (PEX11C).